The following is a 1694-amino-acid chain: Homeobox-DDT domain protein RLT2 (1694 aa).

Positions 1 to 24 are disordered; sequence MEGGSEKTTPEGCGGESKSKRKMK. The homeobox DNA-binding region spans 17–76; that stretch reads SKSKRKMKTAAQLEVLENTYSAEPYPSEAIRADLSVKLNLSDRQLQMWFCHRRLKERKST. In terms of domain architecture, DDT spans 514-573; sequence DENVANLLMVWRFLITFADVLGLWPFTLDEFAQAFHDYDPRLMGEIHIVLLKTIIKDIEG. In terms of domain architecture, HTH HARE-type spans 696-765; the sequence is GTVKFAAFHV…APSTYCVRAS (70 aa). The span at 795-816 shows a compositional bias: acidic residues; it reads EDVDDAERDEDSESDVGEDPEV. Disordered stretches follow at residues 795-822, 1450-1541, 1555-1639, and 1655-1674; these read EDVDDAERDEDSESDVGEDPEVDVNLKK, KQEE…ICNE, AKTS…MNMK, and EDSYGRKQHGISISNDAATR. A phosphoserine mark is found at serine 806 and serine 808. The span at 1459–1470 shows a compositional bias: gly residues; that stretch reads GLGGVSSSGRGG. 2 stretches are compositionally biased toward basic residues: residues 1471–1485 and 1515–1531; these read RPPRGRGRPRARGNG and GGRKNGRRSGTKGRKRP. Composition is skewed to acidic residues over residues 1561–1578, 1589–1605, and 1624–1635; these read DNDDDWIETPELQDDDGE, EDYDDDDVMAPIDDFDG, and DEYEEEEEEEED.

As to quaternary structure, interacts with CHR11. Interacts (via the DDT domain) with CHR11 (via C-terminus). Highly expressed in growing tissues such as inflorescence and flower meristems, young leaves and floral organs. Expressed in roots, rosette and cauline leaves, stems, flowers, inflorescences and siliques.

The protein resides in the nucleus. Its function is as follows. Transcriptional regulator required for the maintenance of the plant vegetative phase. In association with CHR11 or CHR17 may prevent the early activation of the vegetative-to-reproductive transition by regulating key genes that contribute to flower timing, such as FT, SEP1, SEP3, AGL8/FUL, SOC1 and FLC. Involved in the transcriptional regulation of seed-specific gene expression. The sequence is that of Homeobox-DDT domain protein RLT2 from Arabidopsis thaliana (Mouse-ear cress).